Here is a 304-residue protein sequence, read N- to C-terminus: Iron(III) enterobactin esterase (304 aa).

The first 25 residues, 1 to 25, serve as a signal peptide directing secretion; that stretch reads MRTSLLVAALGLALAAALPGGAPLA. Active-site charge relay system residues include serine 182, glutamate 242, and histidine 283.

This sequence belongs to the esterase D family. As to quaternary structure, monomer.

The protein localises to the periplasm. The catalysed reaction is Fe(III)-enterobactin + 3 H2O + H(+) = Fe(III)-[N-(2,3-dihydroxybenzoyl)-L-serine] + 2 N-(2,3-dihydroxybenzoyl)-L-serine. It carries out the reaction Fe(III)-enterobactin + H2O = Fe(III)-[N-(2,3-dihydroxybenzoyl)-L-serine]3 + H(+). The enzyme catalyses Fe(III)-[N-(2,3-dihydroxybenzoyl)-L-serine]3 + H2O + H(+) = Fe(III)-[N-(2,3-dihydroxybenzoyl)-L-serine]2 + N-(2,3-dihydroxybenzoyl)-L-serine. It catalyses the reaction Fe(III)-[N-(2,3-dihydroxybenzoyl)-L-serine]2 + H2O + H(+) = Fe(III)-[N-(2,3-dihydroxybenzoyl)-L-serine] + N-(2,3-dihydroxybenzoyl)-L-serine. Functionally, catalyzes the hydrolysis of ferric enterobactin (Fe-Ent). Hydrolyzes Fe-Ent into three molecules of 2,3-dihydroxybenzoylserine (DHBS) still complexed with ferric iron. Iron reduction is necessary to obtain complete release of the metal from DHBS. It can hydrolyze salmochelin S4 (diglucosyl-C-Ent) but is not involved in iron acquisition by this siderophore. The chain is Iron(III) enterobactin esterase from Pseudomonas aeruginosa (strain ATCC 15692 / DSM 22644 / CIP 104116 / JCM 14847 / LMG 12228 / 1C / PRS 101 / PAO1).